The following is a 178-amino-acid chain: Large ribosomal subunit protein bL25 (178 aa).

This sequence belongs to the bacterial ribosomal protein bL25 family. CTC subfamily. In terms of assembly, part of the 50S ribosomal subunit; part of the 5S rRNA/L5/L18/L25 subcomplex. Contacts the 5S rRNA. Binds to the 5S rRNA independently of L5 and L18.

Its function is as follows. This is one of the proteins that binds to the 5S RNA in the ribosome where it forms part of the central protuberance. The sequence is that of Large ribosomal subunit protein bL25 from Helicobacter pylori (strain P12).